The chain runs to 287 residues: Nucleotide-binding protein Sfri_3380 (287 aa).

8-15 (GRSGSGKS) contributes to the ATP binding site. Position 56–59 (56–59 (DVRN)) interacts with GTP.

The protein belongs to the RapZ-like family.

Functionally, displays ATPase and GTPase activities. The sequence is that of Nucleotide-binding protein Sfri_3380 from Shewanella frigidimarina (strain NCIMB 400).